We begin with the raw amino-acid sequence, 403 residues long: Large ribosomal subunit protein uL3 (403 aa).

The segment at Met-1 to Ser-38 is disordered. At Ser-13 the chain carries Phosphoserine. Residues Pro-18 to Ser-31 show a composition bias toward basic residues. Residue Lys-39 forms a Glycyl lysine isopeptide (Lys-Gly) (interchain with G-Cter in SUMO2) linkage. Lys-136 is modified (N6-acetyllysine). Glycyl lysine isopeptide (Lys-Gly) (interchain with G-Cter in SUMO2) cross-links involve residues Lys-224 and Lys-226. His-245 bears the Tele-methylhistidine mark. Residues Lys-286 and Lys-294 each carry the N6-acetyllysine; alternate modification. Lys-286 is covalently cross-linked (Glycyl lysine isopeptide (Lys-Gly) (interchain with G-Cter in SUMO2); alternate). A Glycyl lysine isopeptide (Lys-Gly) (interchain with G-Cter in SUMO1); alternate cross-link involves residue Lys-294. A Phosphoserine modification is found at Ser-304. Lys-366 is modified (N6-acetyllysine; alternate). Lys-366 participates in a covalent cross-link: Glycyl lysine isopeptide (Lys-Gly) (interchain with G-Cter in SUMO2); alternate. The residue at position 373 (Lys-373) is an N6-acetyllysine. Residues Lys-386, Lys-393, and Lys-399 each participate in a glycyl lysine isopeptide (Lys-Gly) (interchain with G-Cter in SUMO2) cross-link.

Belongs to the universal ribosomal protein uL3 family. As to quaternary structure, component of the large ribosomal subunit. Interacts with DHX33. Constitutively monomethylated at His-245 by METTL18. Methylation at His-245 regulates translation elongation by slowing ribosome traversal on tyrosine codons: slower elongation provides enough time for proper folding of synthesized proteins and prevents cellular aggregation of tyrosine-rich proteins It is not required for incorporation of RPL3 into ribosomes.

The protein localises to the nucleus. The protein resides in the nucleolus. It is found in the cytoplasm. Its function is as follows. Component of the large ribosomal subunit. The ribosome is a large ribonucleoprotein complex responsible for the synthesis of proteins in the cell. In Bos taurus (Bovine), this protein is Large ribosomal subunit protein uL3 (RPL3).